Here is a 174-residue protein sequence, read N- to C-terminus: NADH-ubiquinone oxidoreductase chain 6 (174 aa).

6 consecutive transmembrane segments (helical) span residues 1-21, 24-44, 47-67, 86-106, 111-131, and 151-171; these read MTYVLFLLSVSLVMGFVGFSS, SPIYGGLVLIVSGVVGCTIIL, GGGYMGLMVFLIYLGGMMVVF, VEVLVSVLVGLAMEVGLVLWV, GVVVVVNFNSVGSWMIYEGEG, and WLVVVTGWTLFVGVYIVIEIA.

Belongs to the complex I subunit 6 family. Core subunit of respiratory chain NADH dehydrogenase (Complex I) which is composed of 45 different subunits.

The protein localises to the mitochondrion inner membrane. The catalysed reaction is a ubiquinone + NADH + 5 H(+)(in) = a ubiquinol + NAD(+) + 4 H(+)(out). Functionally, core subunit of the mitochondrial membrane respiratory chain NADH dehydrogenase (Complex I) which catalyzes electron transfer from NADH through the respiratory chain, using ubiquinone as an electron acceptor. Essential for the catalytic activity and assembly of complex I. In Pan paniscus (Pygmy chimpanzee), this protein is NADH-ubiquinone oxidoreductase chain 6 (MT-ND6).